The chain runs to 65 residues: Large ribosomal subunit protein uL29 (65 aa).

The protein belongs to the universal ribosomal protein uL29 family.

The sequence is that of Large ribosomal subunit protein uL29 from Paracidovorax citrulli (strain AAC00-1) (Acidovorax citrulli).